A 1207-amino-acid chain; its full sequence is DNA-directed RNA polymerase subunit beta' (1207 aa).

4 residues coordinate Zn(2+): Cys60, Cys62, Cys75, and Cys78. Residues Asp449, Asp451, and Asp453 each contribute to the Mg(2+) site. Positions 822, 896, 903, and 906 each coordinate Zn(2+).

This sequence belongs to the RNA polymerase beta' chain family. In terms of assembly, the RNAP catalytic core consists of 2 alpha, 1 beta, 1 beta' and 1 omega subunit. When a sigma factor is associated with the core the holoenzyme is formed, which can initiate transcription. Mg(2+) is required as a cofactor. It depends on Zn(2+) as a cofactor.

The enzyme catalyses RNA(n) + a ribonucleoside 5'-triphosphate = RNA(n+1) + diphosphate. Functionally, DNA-dependent RNA polymerase catalyzes the transcription of DNA into RNA using the four ribonucleoside triphosphates as substrates. This is DNA-directed RNA polymerase subunit beta' from Staphylococcus aureus (strain USA300).